We begin with the raw amino-acid sequence, 227 residues long: Calcium-binding protein 1 (227 aa).

Gly-2 carries the N-myristoyl glycine lipid modification. Cys-4 carries the S-palmitoyl cysteine lipid modification. 4 EF-hand domains span residues 82–117 (EEIE…MGYM), 136–153 (GHVD…KLLA), 159–194 (IGVK…LLGH), and 196–227 (VGHR…MMSR). The Ca(2+) site is built by Asp-95, Asp-97, Asp-99, Tyr-101, and Asp-106. The Ca(2+) site is built by Asp-172, Asn-174, Asp-176, and Glu-178. Phosphoserine is present on Ser-180. Ca(2+)-binding residues include Glu-183, Asp-209, Asn-211, Asp-213, Arg-215, and Glu-220.

As to quaternary structure, homodimer; when bound to calcium or magnesium. Interacts (via C-terminus) with ITPR1, ITPR2 and ITPR3. This binding is calcium dependent and the interaction correlates with calcium concentration. An additional calcium-independent interaction with the N-terminus of ITPR1 results in a decreased InsP(3) binding to the receptor. Interacts with CACNA1A (via C-terminal CDB motif) in the pre- and postsynaptic membranes. Interacts with CACNA1D and CACNA1C (via C-terminal C and IQ motifs). The binding to the C motif is calcium independent whereas the binding to IQ requires the presence of calcium and is mutually exclusive with calmodulin binding. Interacts with TRPC5 (via C-terminus). Interacts (via EF-hands 1 and 2) at microtubules with MAP1LC3B. Interacts with MYO1C. Interacts (via EF-hands 1 and 2) with NSMF (via the central NLS-containing motif region), the interaction occurs in a calcium dependent manner after synaptic NMDA receptor stimulation and prevents nuclear import of NSMF. Interacts with SPACA9 homolog. Phosphorylated. The phosphorylation regulates the activity. As to expression, expressed in the inner retina, specifically in amacrine cells and in cone OFF-bipolar cells (at protein level).

Its function is as follows. Modulates calcium-dependent activity of inositol 1,4,5-triphosphate receptors (ITPRs). Inhibits agonist-induced intracellular calcium signaling. Enhances inactivation and does not support calcium-dependent facilitation of voltage-dependent P/Q-type calcium channels. Causes calcium-dependent facilitation and inhibits inactivation of L-type calcium channels by binding to the same sites as calmodulin in the C-terminal domain of CACNA1C, but has an opposite effect on channel function. Suppresses the calcium-dependent inactivation of CACNA1D. Inhibits TRPC5 channels. Prevents NMDA receptor-induced cellular degeneration. Required for the normal transfer of light signals through the retina. This Mus musculus (Mouse) protein is Calcium-binding protein 1 (Cabp1).